Consider the following 430-residue polypeptide: GPI mannosyltransferase 1 (430 aa).

Over 1–11 (MELQSLIDTVS) the chain is Cytoplasmic. Residues 12–32 (LQKLLLLGALLRLILIAYAFF) traverse the membrane as a helical segment. Residues 33–72 (HDQWFRVKYTDIDYMIVVDGARHMWNGGSPFDRTTFRYTP) are Lumenal-facing. Residues 73–93 (LLAALVMPSIWIANPMGKLIF) traverse the membrane as a helical segment. Topologically, residues 94-115 (ASSDLGAAWYCYGVLKSFAKER) are cytoplasmic. A helical membrane pass occupies residues 116-136 (SAKWMVSLFILFNPIVLSVST). Residues 137–163 (RGNSDMLVTFMSLMVLSKFARRKCYQA) lie on the Lumenal side of the membrane. The helical transmembrane segment at 164-184 (AAVLGFAVHFKIYPIIYALPL) threads the bilayer. Over 185-206 (TLGVWEQSVAASTNTWRRVVKT) the chain is Cytoplasmic. The helical transmembrane segment at 207 to 227 (AVVVSICALMAAISFAVPTVL) threads the bilayer. Residues 228–360 (CYMKYGQQYL…AFKFFSWVKA (133 aa)) are Lumenal-facing. The chain crosses the membrane as a helical span at residues 361–381 (LGVVLMWAATIPLWVTTAVPL). Residues 382 to 388 (EFHGYSD) are Cytoplasmic-facing. Residues 389–409 (FAQLWIVSCLFFLAMVVLASM) traverse the membrane as a helical segment. The Lumenal portion of the chain corresponds to 410–430 (LARIAYRVQCTKCSAKSIKVA).

It belongs to the PIGM family.

Its subcellular location is the endoplasmic reticulum membrane. The protein operates within glycolipid biosynthesis; glycosylphosphatidylinositol-anchor biosynthesis. Its function is as follows. Mannosyltransferase involved in glycosylphosphatidylinositol-anchor biosynthesis. Transfers the first alpha-1,4-mannose to GlcN-PI during GPI precursor assembly. This is GPI mannosyltransferase 1 (PIGM) from Trypanosoma brucei brucei (strain 927/4 GUTat10.1).